Here is a 130-residue protein sequence, read N- to C-terminus: Small ribosomal subunit protein uS9 (130 aa).

Belongs to the universal ribosomal protein uS9 family.

In Geotalea daltonii (strain DSM 22248 / JCM 15807 / FRC-32) (Geobacter daltonii), this protein is Small ribosomal subunit protein uS9.